The primary structure comprises 104 residues: Putative protein 22K (104 aa).

Residues 35-104 (YKQLEKELGE…KAPAAKAPSK (70 aa)) are disordered. Residues 60–78 (PLSEGELEEISEEEEEEGE) are compositionally biased toward acidic residues. The segment covering 94–104 (SKAPAAKAPSK) has biased composition (low complexity).

The chain is Putative protein 22K from Snake adenovirus serotype 1 (SnAdV-1).